The chain runs to 189 residues: Threonylcarbamoyl-AMP synthase (189 aa).

Residues 9 to 189 (ASAQRKLSVY…IDGETGKRLR (181 aa)) form the YrdC-like domain.

Belongs to the SUA5 family. TsaC subfamily.

It localises to the cytoplasm. The catalysed reaction is L-threonine + hydrogencarbonate + ATP = L-threonylcarbamoyladenylate + diphosphate + H2O. Functionally, required for the formation of a threonylcarbamoyl group on adenosine at position 37 (t(6)A37) in tRNAs that read codons beginning with adenine. Catalyzes the conversion of L-threonine, HCO(3)(-)/CO(2) and ATP to give threonylcarbamoyl-AMP (TC-AMP) as the acyladenylate intermediate, with the release of diphosphate. The protein is Threonylcarbamoyl-AMP synthase of Neisseria gonorrhoeae (strain ATCC 700825 / FA 1090).